The following is a 336-amino-acid chain: uncharacterized protein (336 aa).

This is an uncharacterized protein from Mycoplasma capricolum subsp. capricolum (strain California kid / ATCC 27343 / NCTC 10154).